The chain runs to 515 residues: MAEQVALSRTQVCGILREELYQGDAFHQADTHIFIIMGASGDLAKKKIYPTIWWLFRDGLLPEDTFIVGYARSRLTVDDIRKQSEPFFKATPEERPKLEEFFARNSYVAGQYDDPASYKHLNSHMNALHQGMQANRLFYLALPPTVYEAVTKNIQETCMSQTGWNRIIVEKPFGRDLQSSNQLSNHISSLFREDQIYRIDHYLGKEMVQNLMVLRFANRIFGPIWNRDNIACVILTFKEPFGTEGRGGYFDEFGIIRDVMQNHLLQMLCLVAMEKPASTDSDDVRDEKVKVLKCISEVETSNVVLGQYVGNPNGEGEATNGYLDDPTVPRGSTTATFAAAVLYVENERWDGVPFILRCGKALNERKAEVRLQFRDVAGDIFHQQCKRNELVIRVQPNEAVYTKMMTKKPGMFFNPEESELDLTYGNRYKNVKLPDAYERLILDVFCGSQMHFVRSDELREAWRIFTPLLHKIDQEKPQPIPYVYGSRGPTEADELMKRVGFQYEGTYKWVNPHKL.

An N-acetylalanine modification is found at Ala2. Ser8 is subject to Phosphoserine. Thr10 bears the Phosphothreonine mark. NADP(+)-binding positions include 38 to 45 (GASGDLAK) and Arg72. The residue at position 89 (Lys89) is an N6-acetyllysine. Residues Tyr147 and Lys171 each contribute to the NADP(+) site. D-glucose 6-phosphate-binding positions include Lys171, 201–205 (HYLGK), Glu239, and Asp258. Lys171 carries the N6-(2-hydroxyisobutyryl)lysine; alternate modification. Lys171 is modified (N6-acetyllysine; alternate). His263 acts as the Proton acceptor in catalysis. Arg357 contributes to the NADP(+) binding site. D-glucose 6-phosphate contacts are provided by Lys360 and Arg365. Lys366, Arg370, and Arg393 together coordinate NADP(+). Gln395 serves as a coordination point for D-glucose 6-phosphate. NADP(+)-binding positions include 401–403 (YTK) and 421–423 (DLT). Residue Lys403 is modified to N6-acetyllysine. N6-acetyllysine is present on Lys432. Arg487 contacts NADP(+). Residue Lys497 is modified to N6-acetyllysine. Tyr503 and Trp509 together coordinate NADP(+). Tyr503 carries the phosphotyrosine modification.

It belongs to the glucose-6-phosphate dehydrogenase family. As to quaternary structure, homotetramer; dimer of dimers. Interacts with SIRT2; the interaction is enhanced by H(2)O(2) treatment. Forms a ternary complex with ALDOB and TP53; this interaction is direct. ALDOB stabilizes the complex inhibiting G6PD activity and keeping oxidative pentose phosphate metabolism in check. In terms of processing, acetylated by ELP3 at Lys-403; acetylation inhibits its homodimerization and enzyme activity. Deacetylated by SIRT2 at Lys-403; deacetylation stimulates its enzyme activity.

Its subcellular location is the cytoplasm. It is found in the cytosol. The protein resides in the membrane. The catalysed reaction is D-glucose 6-phosphate + NADP(+) = 6-phospho-D-glucono-1,5-lactone + NADPH + H(+). It participates in carbohydrate degradation; pentose phosphate pathway; D-ribulose 5-phosphate from D-glucose 6-phosphate (oxidative stage): step 1/3. Cytosolic glucose-6-phosphate dehydrogenase that catalyzes the first and rate-limiting step of the oxidative branch within the pentose phosphate pathway/shunt, an alternative route to glycolysis for the dissimilation of carbohydrates and a major source of reducing power and metabolic intermediates for fatty acid and nucleic acid biosynthetic processes. The protein is Glucose-6-phosphate 1-dehydrogenase (G6PD) of Cricetulus griseus (Chinese hamster).